A 550-amino-acid chain; its full sequence is (+)-germacrene D synthase (550 aa).

3 residues coordinate Mg(2+): D304, D308, and E455. Residues 304-308 (DDIYD) carry the DDXXD motif motif.

It belongs to the terpene synthase family. Tpsa subfamily. Requires Mg(2+) as cofactor. Mn(2+) is required as a cofactor. The cofactor is Co(2+). Ni(2+) serves as cofactor.

Its subcellular location is the cytoplasm. The catalysed reaction is (2E,6E)-farnesyl diphosphate = (+)-germacrene D + diphosphate. It functions in the pathway secondary metabolite biosynthesis; terpenoid biosynthesis. Its function is as follows. Involved in the biosynthesis of germacrene D. Can use farnesyl diphosphate as substrate, but not geranyl diphosphate. Produces mainly (+)-germacrene D along with germacrene B and a number of minor by-products. The protein is (+)-germacrene D synthase of Zingiber officinale (Ginger).